The following is an 82-amino-acid chain: Small ribosomal subunit protein bS18 (82 aa).

Positions 1-21 (MKRNNSKKVRVEPTRRPKKNP) are disordered.

This sequence belongs to the bacterial ribosomal protein bS18 family. As to quaternary structure, part of the 30S ribosomal subunit. Forms a tight heterodimer with protein bS6.

Its function is as follows. Binds as a heterodimer with protein bS6 to the central domain of the 16S rRNA, where it helps stabilize the platform of the 30S subunit. The chain is Small ribosomal subunit protein bS18 from Corynebacterium kroppenstedtii (strain DSM 44385 / JCM 11950 / CIP 105744 / CCUG 35717).